The following is a 134-amino-acid chain: Flagellar basal-body rod protein FlgC (134 aa).

It belongs to the flagella basal body rod proteins family. In terms of assembly, the basal body constitutes a major portion of the flagellar organelle and consists of four rings (L,P,S, and M) mounted on a central rod. The rod consists of about 26 subunits of FlgG in the distal portion, and FlgB, FlgC and FlgF are thought to build up the proximal portion of the rod with about 6 subunits each.

The protein resides in the bacterial flagellum basal body. This chain is Flagellar basal-body rod protein FlgC (flgC), found in Escherichia coli O157:H7.